A 207-amino-acid polypeptide reads, in one-letter code: LexA repressor (207 aa).

The H-T-H motif DNA-binding region spans 28-48; the sequence is RAEISRELGFKSANAAEEHLK. Active-site for autocatalytic cleavage activity residues include serine 123 and lysine 160.

Belongs to the peptidase S24 family. In terms of assembly, homodimer.

It carries out the reaction Hydrolysis of Ala-|-Gly bond in repressor LexA.. Functionally, represses a number of genes involved in the response to DNA damage (SOS response), including recA and lexA. In the presence of single-stranded DNA, RecA interacts with LexA causing an autocatalytic cleavage which disrupts the DNA-binding part of LexA, leading to derepression of the SOS regulon and eventually DNA repair. This is LexA repressor from Haemophilus influenzae (strain ATCC 51907 / DSM 11121 / KW20 / Rd).